A 447-amino-acid polypeptide reads, in one-letter code: N-succinylarginine dihydrolase (447 aa).

Residues 19 to 28 (AGLSFGNEAS), Asn110, and 137 to 138 (HR) each bind substrate. Glu174 is an active-site residue. Residue Arg212 participates in substrate binding. His248 is an active-site residue. The substrate site is built by Asp250 and Asn359. Cys365 (nucleophile) is an active-site residue.

This sequence belongs to the succinylarginine dihydrolase family. Homodimer.

The enzyme catalyses N(2)-succinyl-L-arginine + 2 H2O + 2 H(+) = N(2)-succinyl-L-ornithine + 2 NH4(+) + CO2. Its pathway is amino-acid degradation; L-arginine degradation via AST pathway; L-glutamate and succinate from L-arginine: step 2/5. Functionally, catalyzes the hydrolysis of N(2)-succinylarginine into N(2)-succinylornithine, ammonia and CO(2). The chain is N-succinylarginine dihydrolase from Escherichia coli O17:K52:H18 (strain UMN026 / ExPEC).